The sequence spans 761 residues: RNA-binding protein 12B (761 aa).

Residues Ser-98, Ser-101, and Ser-112 each carry the phosphoserine modification. A Glycyl lysine isopeptide (Lys-Gly) (interchain with G-Cter in SUMO2) cross-link involves residue Lys-114. The disordered stretch occupies residues 120 to 147 (SGYGSSINQDAGFHSNGTGHGNLRPRKT). Lys-151 is covalently cross-linked (Glycyl lysine isopeptide (Lys-Gly) (interchain with G-Cter in SUMO2)). Residues 155 to 230 (PYLFLRGLPY…RFIEVMQGSE (76 aa)) enclose the RRM 1 domain. The span at 247-262 (LRRSEEHSPPRGINDR) shows a compositional bias: basic and acidic residues. The interval 247 to 278 (LRRSEEHSPPRGINDRHFRKRSHSKSPRRTRS) is disordered. Ser-250 and Ser-254 each carry phosphoserine. Residues 263–278 (HFRKRSHSKSPRRTRS) show a composition bias toward basic residues. Thr-276 carries the post-translational modification Phosphothreonine. Phosphoserine occurs at positions 278, 280, 292, and 294. One can recognise an RRM 2 domain in the interval 284–360 (FYVHLKNLSL…RPVHIDPISR (77 aa)). Residue Lys-319 is modified to N6-acetyllysine. A Glycyl lysine isopeptide (Lys-Gly) (interchain with G-Cter in SUMO2) cross-link involves residue Lys-335. The segment covering 372–384 (KKRSGSPERDRPG) has biased composition (basic and acidic residues). Residues 372–392 (KKRSGSPERDRPGHVSQKYSQ) form a disordered region. Ser-377 is subject to Phosphoserine. The RRM 3 domain maps to 400–477 (LCIYIRNFPF…TEVLLRLISE (78 aa)). Glycyl lysine isopeptide (Lys-Gly) (interchain with G-Cter in SUMO2) cross-links involve residues Lys-514 and Lys-541. The span at 538–621 (DNFKHPQRDF…RHPREEDWRR (84 aa)) shows a compositional bias: basic and acidic residues. The tract at residues 538 to 690 (DNFKHPQRDF…THQMKTSGAL (153 aa)) is disordered. A phosphoserine mark is found at Ser-575 and Ser-591. Residues 627–654 (LQSTSGGHPQSISGGHPQSISGARPRST) are compositionally biased toward polar residues. The span at 661-672 (SISGGRLRSISG) shows a compositional bias: low complexity.

The chain is RNA-binding protein 12B (RBM12B) from Pongo abelii (Sumatran orangutan).